The sequence spans 172 residues: Large ribosomal subunit protein uL10 (172 aa).

It belongs to the universal ribosomal protein uL10 family. In terms of assembly, part of the ribosomal stalk of the 50S ribosomal subunit. The N-terminus interacts with L11 and the large rRNA to form the base of the stalk. The C-terminus forms an elongated spine to which L12 dimers bind in a sequential fashion forming a multimeric L10(L12)X complex.

Its function is as follows. Forms part of the ribosomal stalk, playing a central role in the interaction of the ribosome with GTP-bound translation factors. The protein is Large ribosomal subunit protein uL10 of Chlorobium phaeobacteroides (strain DSM 266 / SMG 266 / 2430).